We begin with the raw amino-acid sequence, 412 residues long: Putative potassium channel protein RPA4233 (412 aa).

The next 5 helical transmembrane spans lie at 35–55 (FIVF…VPAM), 65–85 (ALEL…IWIA), 164–184 (LMAC…AMHI), 202–222 (WWAI…ATGI), and 225–245 (MVAS…VGIV). A Selectivity filter motif is present at residues 210-215 (TIGYGD). Position 270–388 (270–388 (LFSHLTAGDI…RKINQIVEGR (119 aa))) interacts with a nucleoside 3',5'-cyclic phosphate.

It belongs to the potassium channel family.

The protein localises to the cell membrane. This chain is Putative potassium channel protein RPA4233, found in Rhodopseudomonas palustris (strain ATCC BAA-98 / CGA009).